The sequence spans 227 residues: Transmembrane emp24 domain-containing protein 1 (227 aa).

Positions 1–23 are cleaved as a signal peptide; sequence MMAAGTALGLALWLLLPPVGVGG. At 24-194 the chain is on the extracellular side; the sequence is AGPPPIQDGE…LQEGNLERVN (171 aa). The GOLD domain occupies 43 to 125; it reads KQCFYQSAPA…EKLVFFELIF (83 aa). Positions 145–170 form a coiled coil; it reads EILEVKMEDIKESIETMRIRLERSIQ. A helical membrane pass occupies residues 195-215; that stretch reads FWSAVNVAVLLLVAVLQVCTL. Topologically, residues 216–227 are cytoplasmic; that stretch reads KRFFQDKRPVPM. Residues 218–219 carry the COPII vesicle coat-binding motif; it reads FF. A COPI vesicle coat-binding motif is present at residues 218-227; sequence FFQDKRPVPM.

This sequence belongs to the EMP24/GP25L family. Homodimer in endoplasmic reticulum, endoplasmic reticulum-Golgi intermediate compartment and cis-Golgi network. Interacts with IL1RL1. Interacts with RNF26; this interaction is important to modulate innate immune signaling through the cGAS-STING pathway.

It is found in the cell membrane. It localises to the endoplasmic reticulum membrane. The protein resides in the golgi apparatus. Its subcellular location is the cis-Golgi network membrane. The protein localises to the endoplasmic reticulum-Golgi intermediate compartment membrane. Functionally, potential role in vesicular protein trafficking, mainly in the early secretory pathway. May act as a cargo receptor at the lumenal side for incorporation of secretory cargo molecules into transport vesicles and may be involved in vesicle coat formation at the cytoplasmic side. Plays a positive role in IL-33-mediated IL-8 and IL-6 production by interacting with interleukin-33 receptor IL1RL1. Plays also a role in the modulation of innate immune signaling through the cGAS-STING pathway by interacting with RNF26. This chain is Transmembrane emp24 domain-containing protein 1 (TMED1), found in Bos taurus (Bovine).